Here is an 89-residue protein sequence, read N- to C-terminus: Small ribosomal subunit protein uS15 (89 aa).

The protein belongs to the universal ribosomal protein uS15 family. As to quaternary structure, part of the 30S ribosomal subunit. Forms a bridge to the 50S subunit in the 70S ribosome, contacting the 23S rRNA.

One of the primary rRNA binding proteins, it binds directly to 16S rRNA where it helps nucleate assembly of the platform of the 30S subunit by binding and bridging several RNA helices of the 16S rRNA. Its function is as follows. Forms an intersubunit bridge (bridge B4) with the 23S rRNA of the 50S subunit in the ribosome. In Streptococcus mutans serotype c (strain ATCC 700610 / UA159), this protein is Small ribosomal subunit protein uS15.